A 434-amino-acid polypeptide reads, in one-letter code: Ataxin-10 homolog (434 aa).

This sequence belongs to the ataxin-10 family.

Its subcellular location is the cytoplasm. The protein resides in the nucleus. Its function is as follows. May play a role in the regulation of cytokinesis. In Schizosaccharomyces pombe (strain 972 / ATCC 24843) (Fission yeast), this protein is Ataxin-10 homolog (mug160).